An 845-amino-acid chain; its full sequence is Dynein axonemal assembly factor 5 (845 aa).

8 HEAT repeats span residues 47 to 84 (DVFDKLYLHLLKCYEDRFESVRSKAIQVVSAFLSSLPP), 138 to 175 (ECYPLVVKILIKSIKDDYPVVQREGCSAVVTLSRLADT), 180 to 217 (PFTESILLPLYTMLNHKHAQARISAIQAIARLSLHMDA), 260 to 297 (SFFERILPLVLCCLKDESPEVLNHIYPQWLKCGIQYFN), 332 to 369 (QRSLRLLQLITRETSDWKDNVRLHALKLLYQFVLHAEA), 523 to 561 (NFGQTLIEKMVKLLNTSVPKIHERWFHLALQDVINLDAA), 674 to 715 (SESV…MSVE), and 766 to 803 (AIVKRAMDLLLLYHESPEKDMRAAVAVTLKVLAKSHPE).

This sequence belongs to the DNAAF5 family. Expressed in testis.

Its subcellular location is the cytoplasm. It is found in the dynein axonemal particle. Its function is as follows. Cytoplasmic protein involved in the delivery of the dynein machinery to the motile cilium. It is required for the assembly of the axonemal dynein inner and outer arms, two structures attached to the peripheral outer doublet A microtubule of the axoneme, that play a crucial role in cilium motility. The sequence is that of Dynein axonemal assembly factor 5 from Drosophila melanogaster (Fruit fly).